We begin with the raw amino-acid sequence, 29 residues long: Cytochrome b6-f complex subunit 8 (29 aa).

Residues 3–23 (IISLAWAALMVVFTFSLSLVV) traverse the membrane as a helical segment.

Belongs to the PetN family. The 4 large subunits of the cytochrome b6-f complex are cytochrome b6, subunit IV (17 kDa polypeptide, PetD), cytochrome f and the Rieske protein, while the 4 small subunits are PetG, PetL, PetM and PetN. The complex functions as a dimer.

It is found in the plastid. The protein resides in the chloroplast thylakoid membrane. Its function is as follows. Component of the cytochrome b6-f complex, which mediates electron transfer between photosystem II (PSII) and photosystem I (PSI), cyclic electron flow around PSI, and state transitions. This is Cytochrome b6-f complex subunit 8 from Nicotiana tomentosiformis (Tobacco).